The sequence spans 105 residues: Large ribosomal subunit protein bL21 (105 aa).

Belongs to the bacterial ribosomal protein bL21 family. As to quaternary structure, part of the 50S ribosomal subunit. Contacts protein L20.

Its function is as follows. This protein binds to 23S rRNA in the presence of protein L20. The chain is Large ribosomal subunit protein bL21 from Methylobacterium nodulans (strain LMG 21967 / CNCM I-2342 / ORS 2060).